We begin with the raw amino-acid sequence, 123 residues long: MIVGIGIDVVYIPRILNLWKKFGNKFLKKVFSQEEIKDSNKYTSCEGKARHFAKRFAAKEAYVKALGTGFGKSIKMSDITTYNTLHGKPQITVKKSNIDYKAELSLSDDTDYAIAFIILHKES.

Asp8 and Glu60 together coordinate Mg(2+).

The protein belongs to the P-Pant transferase superfamily. AcpS family. It depends on Mg(2+) as a cofactor.

It localises to the cytoplasm. The catalysed reaction is apo-[ACP] + CoA = holo-[ACP] + adenosine 3',5'-bisphosphate + H(+). In terms of biological role, transfers the 4'-phosphopantetheine moiety from coenzyme A to a Ser of acyl-carrier-protein. In Ehrlichia ruminantium (strain Gardel), this protein is Holo-[acyl-carrier-protein] synthase.